The chain runs to 1199 residues: MLDVNNFEYMNIGLASPDKIRSWSFGEVKKPETINYRTLKPEKDGLFCERIFGPQKDWECHCGKYKRVRYKGVVCDRCGVEVTRAKVRRERMGHIELAAPVSHIWYFKGIPSRMGLVLDMSPRALEEVIYFASYVVTDPGNTPLEKKQLLSEKEFRAYLDKYGNTFSAAMGAEAINKLLQDIDLVKEVDTLKEELKTAQGQRRTRAIKRLEVLEAFRNSGNKPSWMILDVLPVIPPELRPMVQLDGGRFATSDLNDLYRRVINRNNRLKRLLDLGAPSIIVQNEKRMLQEAVDALIDNGRRGRPVTGPGNRPLKSLSHMLKGKQGRFRQNLLGKRVDYSGRSVIVVGPHLKMYQCGLPKEMALELFKPFVMKELVEKGLAHNIKSAKRKIERVQPEVWDVLESVIREHPVLLNRAPTLHRLGIQAFEPTLVEGRAIRLHPLVCTAYNADFDGDQMAVHVPLSAEAQAEARILMLAAQNILNPKDGKPVVTPSQDMVLGNYYLTLERKGAIGEGMVFKDTNEALLAYQNGYVHLHTRVAVAANSLKNVTFTDEQRSKLLITTVGKLIFNEILPESFPYMNEPTKSNIEEKTPDRFFLEKGEDVKATIEKQEINAPFKKGILGKIIAEIFKRFHITETSKMLDRMKNLGFKYSTKAGITVGVSDIVVLDDKQKILEEAQAKVDNVMKQFRRGLITEEERYERVISIWSSSKDVIQGKLMKSLDEVNPIYMMSDSGARGNASNFTQLAGMRGLMANPAGRIIELPIKSSFREGLTVLEYFISTHGARKGLADTALKTADSGYLTRRLVDVAQDVIIRETDCGTDRGILAKSIREGNEIIEKLEERLIGRFARKPIVHPETGEVIVGENELIDEDKALEVVEAGIEEVWIRSAFTCNTPHGVCKRCYGRNLATGTDVEVGEAVGIIAAQSIGEPGTQLTMRTFHTGGVAGDDITQGLPRIQELFEARNPKGQATISEIDGVVAEINDVRDKQQEIVVQGDVETRSYTAPYNARLKVVEGDKVTRGQVLTEGSIDPKELLKVTDMTAVQEYLLHEVQKVYRMQGVEIGDKHVEVMVRQMLRKVRVADAGDTDVLPGTLLDVHQFTEANKKVLFEGKRPATGRPVLLGITKASLETDSFLSAASFQETTRVLTDAAIKGKRDELLGLKENVIIGKLVPAGTGMPNYRKVKPVSQVQPSDDMVPVE.

C60, C62, C75, and C78 together coordinate Zn(2+). Mg(2+) is bound by residues D449, D451, and D453. Positions 818, 892, 899, and 902 each coordinate Zn(2+).

The protein belongs to the RNA polymerase beta' chain family. In terms of assembly, the RNAP catalytic core consists of 2 alpha, 1 beta, 1 beta' and 1 omega subunit. When a sigma factor is associated with the core the holoenzyme is formed, which can initiate transcription. It depends on Mg(2+) as a cofactor. Requires Zn(2+) as cofactor.

The catalysed reaction is RNA(n) + a ribonucleoside 5'-triphosphate = RNA(n+1) + diphosphate. Its function is as follows. DNA-dependent RNA polymerase catalyzes the transcription of DNA into RNA using the four ribonucleoside triphosphates as substrates. This Bacillus pumilus (strain SAFR-032) protein is DNA-directed RNA polymerase subunit beta'.